We begin with the raw amino-acid sequence, 823 residues long: Apoptosis-resistant E3 ubiquitin protein ligase 1 (823 aa).

Residues 64–158 (WDWKDPYEVG…VAYSPYYKIF (95 aa)) form a Filamin repeat. Positions 315 to 345 (PPMHMSSSQRRPSTAIEEDDEDSPSECHTPE) are disordered. The interaction with SOCS2 stretch occupies residues 483-789 (SISDWSKNFE…THSTLPTAHT (307 aa)). Residues 483–823 (SISDWSKNFE…SEGCEGFGML (341 aa)) form the HECT domain. Cys790 acts as the Glycyl thioester intermediate in catalysis.

In terms of assembly, interacts with SOCS2. Interacts (via HECT domain) with HTRA2, DIABLO/SMAC and SEPTIN4; in the cytoplasm following induction of apoptosis. Post-translationally, autoubiquitinated in vitro in the presence of E2 enzyme UBE2D1/UBCH5A. Detected in brain, testis, heart, liver, lung and kidney with very low levels in skeletal muscle and spleen.

The enzyme catalyses S-ubiquitinyl-[E2 ubiquitin-conjugating enzyme]-L-cysteine + [acceptor protein]-L-lysine = [E2 ubiquitin-conjugating enzyme]-L-cysteine + N(6)-ubiquitinyl-[acceptor protein]-L-lysine.. It participates in protein modification; protein ubiquitination. In terms of biological role, E3 ubiquitin-protein ligase that catalyzes 'Lys-11'- or 'Lys-33'-linked polyubiquitin chains, with some preference for 'Lys-33' linkages. E3 ubiquitin-protein ligases accept ubiquitin from an E2 ubiquitin-conjugating enzyme in the form of a thioester and then directly transfers the ubiquitin to targeted substrates. Ubiquitinates SEPTIN4, DIABLO/SMAC and HTRA2 in vitro. Modulates pulmonary inflammation by targeting SOCS2 for ubiquitination and subsequent degradation by the proteasome. This chain is Apoptosis-resistant E3 ubiquitin protein ligase 1 (Arel1), found in Mus musculus (Mouse).